The chain runs to 710 residues: Cyclomaltodextrin glucanotransferase (710 aa).

The first 27 residues, 1-27 (MKKTFKLILVLMLSLTLVFGLTAPIQA), serve as a signal peptide directing secretion. Ca(2+) is bound by residues aspartate 54, asparagine 56, asparagine 59, asparagine 60, glycine 78, and aspartate 80. 128–129 (YW) contacts substrate. Residue asparagine 167 participates in Ca(2+) binding. Residue histidine 168 participates in substrate binding. Isoleucine 218 contacts Ca(2+). A substrate-binding site is contributed by 221-224 (NLFD). Aspartate 227 contacts Ca(2+). Arginine 255 lines the substrate pocket. Residue aspartate 257 is the Nucleophile of the active site. Position 260 to 261 (260 to 261 (KH)) interacts with substrate. Residue histidine 261 coordinates Ca(2+). Residue glutamate 285 is the Proton donor of the active site. Positions 355, 398, and 402 each coordinate substrate. Positions 526 to 603 (PLIGHVGPTM…GATSNTYNNI (78 aa)) constitute an IPT/TIG domain. A CBM20 domain is found at 605 to 710 (ILTGNQICVR…TGTVIVNWQQ (106 aa)).

It belongs to the glycosyl hydrolase 13 family. Ca(2+) serves as cofactor.

Its subcellular location is the secreted. The enzyme catalyses Cyclizes part of a (1-&gt;4)-alpha-D-glucan chain by formation of a (1-&gt;4)-alpha-D-glucosidic bond.. Degrades starch to alpha-, beta-, and gamma-cyclodextrins, as well as linear sugars. The protein is Cyclomaltodextrin glucanotransferase (amyA) of Thermoanaerobacterium thermosulfurigenes (Clostridium thermosulfurogenes).